We begin with the raw amino-acid sequence, 312 residues long: Carbonic anhydrase 4 (312 aa).

An N-terminal signal peptide occupies residues 1–18; the sequence is MRLLLALLVLAAAPPQAR. The Alpha-carbonic anhydrase domain occupies 21-285; it reads SHWCYQIQVK…LGQRQVFRSG (265 aa). 2 disulfide bridges follow: Cys24-Cys36 and Cys46-Cys229. N-linked (GlcNAc...) asparagine glycosylation is present at Asn33. His88 functions as the Proton donor/acceptor in the catalytic mechanism. The Zn(2+) site is built by His115, His117, and His140. N-linked (GlcNAc...) asparagine glycosylation is found at Asn152 and Asn195. 225 to 226 provides a ligand contact to substrate; that stretch reads TT. Asn265 carries N-linked (GlcNAc...) asparagine glycosylation. Ser284 carries the GPI-anchor amidated serine lipid modification. A propeptide spans 285–312 (removed in mature form); sequence GAPGLLLAQPLPTLLAPVLACLTVGFLR.

It belongs to the alpha-carbonic anhydrase family. Interacts with SLC4A4. It depends on Zn(2+) as a cofactor.

It localises to the cell membrane. The catalysed reaction is hydrogencarbonate + H(+) = CO2 + H2O. With respect to regulation, inhibited by acetazolamide. In terms of biological role, catalyzes the reversible hydration of carbon dioxide into bicarbonate and protons and thus is essential to maintaining intracellular and extracellular pH. May stimulate the sodium/bicarbonate transporter activity of SLC4A4 that acts in pH homeostasis. It is essential for acid overload removal from the retina and retina epithelium, and acid release in the choriocapillaris in the choroid. This is Carbonic anhydrase 4 (CA4) from Bos taurus (Bovine).